A 359-amino-acid polypeptide reads, in one-letter code: Glycerol-3-phosphate dehydrogenase [NAD(P)+] (359 aa).

4 residues coordinate NADPH: T11, W12, R32, and K107. Sn-glycerol 3-phosphate contacts are provided by K107 and G138. A142 lines the NADPH pocket. Positions 193, 246, 256, 257, and 258 each coordinate sn-glycerol 3-phosphate. K193 (proton acceptor) is an active-site residue. R257 lines the NADPH pocket. NADPH contacts are provided by V281 and E283.

This sequence belongs to the NAD-dependent glycerol-3-phosphate dehydrogenase family.

The protein resides in the cytoplasm. It catalyses the reaction sn-glycerol 3-phosphate + NAD(+) = dihydroxyacetone phosphate + NADH + H(+). The catalysed reaction is sn-glycerol 3-phosphate + NADP(+) = dihydroxyacetone phosphate + NADPH + H(+). It functions in the pathway membrane lipid metabolism; glycerophospholipid metabolism. Catalyzes the reduction of the glycolytic intermediate dihydroxyacetone phosphate (DHAP) to sn-glycerol 3-phosphate (G3P), the key precursor for phospholipid synthesis. This is Glycerol-3-phosphate dehydrogenase [NAD(P)+] from Dehalococcoides mccartyi (strain ATCC BAA-2266 / KCTC 15142 / 195) (Dehalococcoides ethenogenes (strain 195)).